Reading from the N-terminus, the 1420-residue chain is ABC transporter G family member 32 (1420 aa).

The ABC transporter 1 domain occupies 135-408 (LRNIHVIGGK…FSSLGFTCPD (274 aa)). 168 to 175 (GPPSSGKT) contacts ATP. The 214-residue stretch at 486–699 (ELLKINFAWQ…AQNAASVNEF (214 aa)) folds into the ABC transmembrane type-2 1 domain. Helical transmembrane passes span 504 to 524 (FIYVFKFVQLLLVALITMTVF), 544 to 564 (LYFSMVIILFNGFTEVPMLVA), 585 to 605 (LPSWLLSIPTSIIESATWVAV), 623 to 643 (FLLYFSLHQMSLGLFRVMGSL), 648 to 668 (IVANTFGSFAMLVVMTLGGFI), 674 to 694 (IPSWWIWGYWISPLMYAQNAA), and 735 to 755 (IGVAALLGYTVLFNILFTLFL). Residues 818 to 1070 (LSFSNINYYV…ELIKYFESIE (253 aa)) form the ABC transporter 2 domain. Residue 863 to 870 (GVSGAGKT) coordinates ATP. Positions 1143–1357 (SQFVACLWKQ…TLYGLLVSQY (215 aa)) constitute an ABC transmembrane type-2 2 domain. 7 consecutive transmembrane segments (helical) span residues 1162-1182 (YTAVRFFYTVVISLMLGTICW), 1202-1222 (YAAVLFIGITNATAAQPVVSI), 1235-1255 (MYSALPFAFAQVFIEFPYVLA), 1277-1297 (FLWYLFFMYFSIMYFTFYGMM), 1307-1327 (VASIIAAPFYMLWNLFSGFMI), 1334-1354 (LWWRWYYWANPVAWTLYGLLV), and 1392-1412 (VSAIMVVAFCVFFSLVFAFAI).

This sequence belongs to the ABC transporter superfamily. ABCG family. PDR (TC 3.A.1.205) subfamily. As to expression, ubiquitous in aerial organs. Higher expression levels in young, expanding tissues than in older tissues. Detected in the epidermal layer.

It localises to the cell membrane. Functionally, may be a general defense protein. Required for the formation of the cuticle layer of the cell wall. The sequence is that of ABC transporter G family member 32 from Arabidopsis thaliana (Mouse-ear cress).